The sequence spans 434 residues: MNNAVLNQPNKYDLVKDTLVLILAGGRGSRLHELTDKRAKPALYFGGNRRIIDFALSNCINSGLNRIGVITQYAAHSLLRHLQTGWSFLPQERGEFVDMLPARQQIDDNTWYRGTADSVYQNLAIIRGHYKPKYVLILAGDHIYKMDYSQMLLDHVSSGAKCTVGCIEVPREEAKEFGVMAVNETLKVKAFVEKPQDPPAMIGKPNSSLASMGIYVFNADYLYEALDRIKTPNTSHDFGKDVMPLALNDGVLYAHPFDRSCKGRNTEGAIYWKDVGTLDSFWQANIDLVSEEPQLDIYDQTWPIRGNPVQAYPSKFFYDEPNCKQVDNSLIAGGCMVKNASISYSVLFDNVSVNAGSSIEQSVILPQVKIGKNCMLRRCIIDRHVQIPDGMQIGVDLELDSKRFRISKNGIVLVTESMLHKLNGKSVASEAHLD.

Alpha-D-glucose 1-phosphate contacts are provided by residues Tyr112, Gly178, 193 to 194, and Ser211; that span reads EK.

The protein belongs to the bacterial/plant glucose-1-phosphate adenylyltransferase family. As to quaternary structure, homotetramer.

The enzyme catalyses alpha-D-glucose 1-phosphate + ATP + H(+) = ADP-alpha-D-glucose + diphosphate. It functions in the pathway glycan biosynthesis; glycogen biosynthesis. In terms of biological role, involved in the biosynthesis of ADP-glucose, a building block required for the elongation reactions to produce glycogen. Catalyzes the reaction between ATP and alpha-D-glucose 1-phosphate (G1P) to produce pyrophosphate and ADP-Glc. The chain is Glucose-1-phosphate adenylyltransferase from Mannheimia succiniciproducens (strain KCTC 0769BP / MBEL55E).